The primary structure comprises 117 residues: MDKKAARIRRATRARRKLQELGATRLVVHRTPRHIYAQVIAPNGSETLVAASTTEKAINEQLKYTGNKEAAAAVGKAIAERALEKGIKDVSFDRSGFQYHGRVQALADAAREAGLQF.

The protein belongs to the universal ribosomal protein uL18 family. Part of the 50S ribosomal subunit; part of the 5S rRNA/L5/L18/L25 subcomplex. Contacts the 5S and 23S rRNAs.

Functionally, this is one of the proteins that bind and probably mediate the attachment of the 5S RNA into the large ribosomal subunit, where it forms part of the central protuberance. This is Large ribosomal subunit protein uL18 from Photorhabdus laumondii subsp. laumondii (strain DSM 15139 / CIP 105565 / TT01) (Photorhabdus luminescens subsp. laumondii).